The chain runs to 129 residues: Glycine cleavage system H protein (129 aa).

Positions 24–106 (SYTVGITEHA…YGEGWFFRVM (83 aa)) constitute a Lipoyl-binding domain. K65 is subject to N6-lipoyllysine.

It belongs to the GcvH family. In terms of assembly, the glycine cleavage system is composed of four proteins: P, T, L and H. The cofactor is (R)-lipoate.

Its function is as follows. The glycine cleavage system catalyzes the degradation of glycine. The H protein shuttles the methylamine group of glycine from the P protein to the T protein. The sequence is that of Glycine cleavage system H protein from Shewanella oneidensis (strain ATCC 700550 / JCM 31522 / CIP 106686 / LMG 19005 / NCIMB 14063 / MR-1).